The primary structure comprises 396 residues: CCA-adding enzyme (396 aa).

ATP-binding residues include glycine 32 and arginine 35. CTP is bound by residues glycine 32 and arginine 35. The Mg(2+) site is built by aspartate 45 and aspartate 47. Residues arginine 116, aspartate 159, arginine 162, arginine 165, and arginine 168 each contribute to the ATP site. Positions 116, 159, 162, 165, and 168 each coordinate CTP.

The protein belongs to the tRNA nucleotidyltransferase/poly(A) polymerase family. Bacterial CCA-adding enzyme type 3 subfamily. As to quaternary structure, homodimer. The cofactor is Mg(2+).

The enzyme catalyses a tRNA precursor + 2 CTP + ATP = a tRNA with a 3' CCA end + 3 diphosphate. It catalyses the reaction a tRNA with a 3' CCA end + 2 CTP + ATP = a tRNA with a 3' CCACCA end + 3 diphosphate. Catalyzes the addition and repair of the essential 3'-terminal CCA sequence in tRNAs without using a nucleic acid template. Adds these three nucleotides in the order of C, C, and A to the tRNA nucleotide-73, using CTP and ATP as substrates and producing inorganic pyrophosphate. tRNA 3'-terminal CCA addition is required both for tRNA processing and repair. Also involved in tRNA surveillance by mediating tandem CCA addition to generate a CCACCA at the 3' terminus of unstable tRNAs. While stable tRNAs receive only 3'-terminal CCA, unstable tRNAs are marked with CCACCA and rapidly degraded. The polypeptide is CCA-adding enzyme (Lactobacillus delbrueckii subsp. bulgaricus (strain ATCC BAA-365 / Lb-18)).